A 121-amino-acid chain; its full sequence is MIQQESFLTVADNSGAKRIQCIRVLGTNRRYAHVGDVIVAAVKDAMPNMGVKKSDVVKAVVVRTKATLRRETGNSIRFDDNAAVIINDDKNPKGTRVFGPVARELRERSFTKIVSLAPEVI.

It belongs to the universal ribosomal protein uL14 family. As to quaternary structure, part of the 50S ribosomal subunit. Forms a cluster with proteins L3 and L19. In the 70S ribosome, L14 and L19 interact and together make contacts with the 16S rRNA in bridges B5 and B8.

Functionally, binds to 23S rRNA. Forms part of two intersubunit bridges in the 70S ribosome. The sequence is that of Large ribosomal subunit protein uL14 from Synechococcus sp. (strain CC9902).